The chain runs to 310 residues: Carbamate kinase 1 (310 aa).

It belongs to the carbamate kinase family.

The protein localises to the cytoplasm. The catalysed reaction is hydrogencarbonate + NH4(+) + ATP = carbamoyl phosphate + ADP + H2O + H(+). Its pathway is metabolic intermediate metabolism; carbamoyl phosphate degradation; CO(2) and NH(3) from carbamoyl phosphate: step 1/1. This Staphylococcus aureus (strain COL) protein is Carbamate kinase 1 (arcC1).